Reading from the N-terminus, the 170-residue chain is Large ribosomal subunit protein uL10 (170 aa).

This sequence belongs to the universal ribosomal protein uL10 family. Part of the ribosomal stalk of the 50S ribosomal subunit. The N-terminus interacts with L11 and the large rRNA to form the base of the stalk. The C-terminus forms an elongated spine to which L12 dimers bind in a sequential fashion forming a multimeric L10(L12)X complex.

Forms part of the ribosomal stalk, playing a central role in the interaction of the ribosome with GTP-bound translation factors. In Chlamydia pneumoniae (Chlamydophila pneumoniae), this protein is Large ribosomal subunit protein uL10 (rplJ).